We begin with the raw amino-acid sequence, 938 residues long: Isoleucine--tRNA ligase (938 aa).

The 'HIGH' region signature appears at 58–68; sequence PYANGSIHIGH. Residue E561 coordinates L-isoleucyl-5'-AMP. The short motif at 602-606 is the 'KMSKS' region element; sequence KMSKS. K605 provides a ligand contact to ATP. Positions 901, 904, 921, and 924 each coordinate Zn(2+).

It belongs to the class-I aminoacyl-tRNA synthetase family. IleS type 1 subfamily. In terms of assembly, monomer. Zn(2+) serves as cofactor.

The protein resides in the cytoplasm. The enzyme catalyses tRNA(Ile) + L-isoleucine + ATP = L-isoleucyl-tRNA(Ile) + AMP + diphosphate. Catalyzes the attachment of isoleucine to tRNA(Ile). As IleRS can inadvertently accommodate and process structurally similar amino acids such as valine, to avoid such errors it has two additional distinct tRNA(Ile)-dependent editing activities. One activity is designated as 'pretransfer' editing and involves the hydrolysis of activated Val-AMP. The other activity is designated 'posttransfer' editing and involves deacylation of mischarged Val-tRNA(Ile). In Serratia proteamaculans (strain 568), this protein is Isoleucine--tRNA ligase.